The chain runs to 336 residues: Protein-glutamate methylesterase/protein-glutamine glutaminase 1 (336 aa).

Residues 2–119 enclose the Response regulatory domain; sequence KIAIVNDMPL…GNPQEAAAPL (118 aa). 4-aspartylphosphate is present on aspartate 53. One can recognise a CheB-type methylesterase domain in the interval 147 to 336; sequence TASRQRLVAI…APRLLEIFPK (190 aa). Catalysis depends on residues serine 159, histidine 186, and aspartate 279.

The protein belongs to the CheB family. In terms of processing, phosphorylated by CheA. Phosphorylation of the N-terminal regulatory domain activates the methylesterase activity.

It is found in the cytoplasm. The enzyme catalyses [protein]-L-glutamate 5-O-methyl ester + H2O = L-glutamyl-[protein] + methanol + H(+). It carries out the reaction L-glutaminyl-[protein] + H2O = L-glutamyl-[protein] + NH4(+). Functionally, involved in chemotaxis. Part of a chemotaxis signal transduction system that modulates chemotaxis in response to various stimuli. Catalyzes the demethylation of specific methylglutamate residues introduced into the chemoreceptors (methyl-accepting chemotaxis proteins or MCP) by CheR. Also mediates the irreversible deamidation of specific glutamine residues to glutamic acid. The chain is Protein-glutamate methylesterase/protein-glutamine glutaminase 1 from Pseudomonas fluorescens (strain Pf0-1).